Consider the following 447-residue polypeptide: Signal recognition particle 54 kDa protein (447 aa).

GTP is bound by residues 103–110, 185–189, and 245–248; these read GVQGSGKT, DTAGR, and TKMD.

It belongs to the GTP-binding SRP family. SRP54 subfamily. In terms of assembly, part of the signal recognition particle protein translocation system, which is composed of SRP and FtsY. Archaeal SRP consists of a 7S RNA molecule of 300 nucleotides and two protein subunits: SRP54 and SRP19.

The protein resides in the cytoplasm. The catalysed reaction is GTP + H2O = GDP + phosphate + H(+). Involved in targeting and insertion of nascent membrane proteins into the cytoplasmic membrane. Binds to the hydrophobic signal sequence of the ribosome-nascent chain (RNC) as it emerges from the ribosomes. The SRP-RNC complex is then targeted to the cytoplasmic membrane where it interacts with the SRP receptor FtsY. The polypeptide is Signal recognition particle 54 kDa protein (Saccharolobus islandicus (strain Y.G.57.14 / Yellowstone #1) (Sulfolobus islandicus)).